A 261-amino-acid polypeptide reads, in one-letter code: Cytochrome c oxidase subunit 3 (261 aa).

Residues 1–15 (MAHQAHSYHMVDPSP) lie on the Mitochondrial matrix side of the membrane. The helical transmembrane segment at 16 to 34 (WPIFGATAALLTTSGLIMW) threads the bilayer. The Mitochondrial intermembrane portion of the chain corresponds to 35–40 (FHYNSL). The chain crosses the membrane as a helical span at residues 41–66 (YLLTLGLLSMFLVMIQWWRDIVREST). At 67–72 (FQGHHT) the chain is on the mitochondrial matrix side. Residues 73–105 (PTVQKGLRYGMILFITSEAFFFLGFFWAFFHSS) traverse the membrane as a helical segment. The Mitochondrial intermembrane portion of the chain corresponds to 106–128 (LAPTPELGAQWPPTGINPLNPLE). A helical membrane pass occupies residues 129-152 (VPLLNTAILLASGVTVTWAHHSIT). The Mitochondrial matrix segment spans residues 153 to 155 (ESN). A helical transmembrane segment spans residues 156 to 183 (RKQAIHALSLTIILGFYFTALQAMEYHE). Residues 184-190 (ASFSIAD) are Mitochondrial intermembrane-facing. Residues 191–223 (GVYGSTFFVATGFHGLHVIIGSSFLTVCLLRLI) traverse the membrane as a helical segment. Topologically, residues 224-232 (KFHFTTNHH) are mitochondrial matrix. The chain crosses the membrane as a helical span at residues 233 to 256 (FGFEAAAWYWHFVDVIWLFLYMSI). Over 257–261 (YWWGS) the chain is Mitochondrial intermembrane.

This sequence belongs to the cytochrome c oxidase subunit 3 family. As to quaternary structure, component of the cytochrome c oxidase (complex IV, CIV), a multisubunit enzyme composed of 14 subunits. The complex is composed of a catalytic core of 3 subunits MT-CO1, MT-CO2 and MT-CO3, encoded in the mitochondrial DNA, and 11 supernumerary subunits COX4I, COX5A, COX5B, COX6A, COX6B, COX6C, COX7A, COX7B, COX7C, COX8 and NDUFA4, which are encoded in the nuclear genome. The complex exists as a monomer or a dimer and forms supercomplexes (SCs) in the inner mitochondrial membrane with NADH-ubiquinone oxidoreductase (complex I, CI) and ubiquinol-cytochrome c oxidoreductase (cytochrome b-c1 complex, complex III, CIII), resulting in different assemblies (supercomplex SCI(1)III(2)IV(1) and megacomplex MCI(2)III(2)IV(2)).

Its subcellular location is the mitochondrion inner membrane. It carries out the reaction 4 Fe(II)-[cytochrome c] + O2 + 8 H(+)(in) = 4 Fe(III)-[cytochrome c] + 2 H2O + 4 H(+)(out). Functionally, component of the cytochrome c oxidase, the last enzyme in the mitochondrial electron transport chain which drives oxidative phosphorylation. The respiratory chain contains 3 multisubunit complexes succinate dehydrogenase (complex II, CII), ubiquinol-cytochrome c oxidoreductase (cytochrome b-c1 complex, complex III, CIII) and cytochrome c oxidase (complex IV, CIV), that cooperate to transfer electrons derived from NADH and succinate to molecular oxygen, creating an electrochemical gradient over the inner membrane that drives transmembrane transport and the ATP synthase. Cytochrome c oxidase is the component of the respiratory chain that catalyzes the reduction of oxygen to water. Electrons originating from reduced cytochrome c in the intermembrane space (IMS) are transferred via the dinuclear copper A center (CU(A)) of subunit 2 and heme A of subunit 1 to the active site in subunit 1, a binuclear center (BNC) formed by heme A3 and copper B (CU(B)). The BNC reduces molecular oxygen to 2 water molecules using 4 electrons from cytochrome c in the IMS and 4 protons from the mitochondrial matrix. This is Cytochrome c oxidase subunit 3 (MT-CO3) from Struthio camelus (Common ostrich).